The sequence spans 265 residues: Hydroxyethylthiazole kinase (265 aa).

Met-43 lines the substrate pocket. Residues Arg-119 and Ser-165 each coordinate ATP. Ala-192 contacts substrate.

This sequence belongs to the Thz kinase family. It depends on Mg(2+) as a cofactor.

It carries out the reaction 5-(2-hydroxyethyl)-4-methylthiazole + ATP = 4-methyl-5-(2-phosphooxyethyl)-thiazole + ADP + H(+). It participates in cofactor biosynthesis; thiamine diphosphate biosynthesis; 4-methyl-5-(2-phosphoethyl)-thiazole from 5-(2-hydroxyethyl)-4-methylthiazole: step 1/1. In terms of biological role, catalyzes the phosphorylation of the hydroxyl group of 4-methyl-5-beta-hydroxyethylthiazole (THZ). The protein is Hydroxyethylthiazole kinase of Haemophilus influenzae (strain ATCC 51907 / DSM 11121 / KW20 / Rd).